We begin with the raw amino-acid sequence, 213 residues long: Ribosomal RNA small subunit methyltransferase G (213 aa).

Residues glycine 75, phenylalanine 80, 128 to 129 (IE), and arginine 144 contribute to the S-adenosyl-L-methionine site.

Belongs to the methyltransferase superfamily. RNA methyltransferase RsmG family.

It is found in the cytoplasm. The enzyme catalyses guanosine(527) in 16S rRNA + S-adenosyl-L-methionine = N(7)-methylguanosine(527) in 16S rRNA + S-adenosyl-L-homocysteine. In terms of biological role, specifically methylates the N7 position of guanine in position 527 of 16S rRNA. The protein is Ribosomal RNA small subunit methyltransferase G of Brucella suis biovar 1 (strain 1330).